We begin with the raw amino-acid sequence, 561 residues long: Oxygen-dependent choline dehydrogenase (561 aa).

6–35 (DYIIIGAGSAGNVLATRLTEDADVSVLLLE) serves as a coordination point for FAD. The Proton acceptor role is filled by histidine 475.

This sequence belongs to the GMC oxidoreductase family. It depends on FAD as a cofactor.

It catalyses the reaction choline + A = betaine aldehyde + AH2. It carries out the reaction betaine aldehyde + NAD(+) + H2O = glycine betaine + NADH + 2 H(+). The protein operates within amine and polyamine biosynthesis; betaine biosynthesis via choline pathway; betaine aldehyde from choline (cytochrome c reductase route): step 1/1. Its function is as follows. Involved in the biosynthesis of the osmoprotectant glycine betaine. Catalyzes the oxidation of choline to betaine aldehyde and betaine aldehyde to glycine betaine at the same rate. This chain is Oxygen-dependent choline dehydrogenase, found in Pseudomonas aeruginosa (strain LESB58).